A 566-amino-acid polypeptide reads, in one-letter code: Cytoplasmic polyadenylation element-binding protein 2 (566 aa).

Disordered stretches follow at residues 17–46 (FWGNGDQLEGKTLSSIKQQESKKMDDSVEG) and 64–98 (LERLHEKEEQECEEERLDWSEKVDSEEEEEDIQEQ). A compositionally biased stretch (acidic residues) spans 87–98 (DSEEEEEDIQEQ). Positions 430–512 (MVAFIGGVPR…KRVEIKPYFF (83 aa)) constitute an RRM domain.

In terms of biological role, cytoplasmic polyadenylation element binding protein that binds to and regulates the translation of specific mRNAs. This chain is Cytoplasmic polyadenylation element-binding protein 2 (cpb-2), found in Caenorhabditis briggsae.